We begin with the raw amino-acid sequence, 334 residues long: N-acetyl-gamma-glutamyl-phosphate reductase (334 aa).

Cys-154 is an active-site residue.

Belongs to the NAGSA dehydrogenase family. Type 1 subfamily.

Its subcellular location is the cytoplasm. The catalysed reaction is N-acetyl-L-glutamate 5-semialdehyde + phosphate + NADP(+) = N-acetyl-L-glutamyl 5-phosphate + NADPH + H(+). It participates in amino-acid biosynthesis; L-arginine biosynthesis; N(2)-acetyl-L-ornithine from L-glutamate: step 3/4. Catalyzes the NADPH-dependent reduction of N-acetyl-5-glutamyl phosphate to yield N-acetyl-L-glutamate 5-semialdehyde. The sequence is that of N-acetyl-gamma-glutamyl-phosphate reductase from Pectobacterium carotovorum subsp. carotovorum (strain PC1).